The primary structure comprises 250 residues: UPF0736 protein BPUM_1067 (250 aa).

Belongs to the UPF0736 family.

The sequence is that of UPF0736 protein BPUM_1067 from Bacillus pumilus (strain SAFR-032).